A 336-amino-acid chain; its full sequence is MCYPLARKALFQLDPEHAHELTFRQLKRITGTPFEFFIRQSIATKPVTCMGLSFKNPLGLAAGLDKDGDCIDAFGAMGFGFIEIGTVTPRAQAGNDKPRLFRIVEAEGLINRMGFNNLGVDNLVENVKKAKYGGVIGINIGKNKDTPVEHGKDDYLICMDKIYPHAGYITINISSPNTPGLRTLQYGEALDDLLSAIKNKQGELQQKYQKYVPVAVKIAPDLSEEELIQIADSLIRHNIDGAIATNTTLDKRLVEGLNYCQQAGGLSGRPVQLRSTEVIRQLSQELRDKIPIIGVGGIDSLTAAREKIAAGASLIQIFSGFIYHGPKLIKDIVNHI.

FMN contacts are provided by residues 62–66 (AGLDK) and T86. Residue K66 coordinates substrate. 111–115 (NRMGF) is a substrate binding site. Residues N139 and N172 each contribute to the FMN site. N172 serves as a coordination point for substrate. Catalysis depends on S175, which acts as the Nucleophile. N177 is a binding site for substrate. 2 residues coordinate FMN: K217 and T245. 246–247 (NT) contacts substrate. Residues G268, G297, and 318–319 (FS) contribute to the FMN site.

This sequence belongs to the dihydroorotate dehydrogenase family. Type 2 subfamily. In terms of assembly, monomer. FMN serves as cofactor.

Its subcellular location is the cell membrane. The catalysed reaction is (S)-dihydroorotate + a quinone = orotate + a quinol. Its pathway is pyrimidine metabolism; UMP biosynthesis via de novo pathway; orotate from (S)-dihydroorotate (quinone route): step 1/1. Functionally, catalyzes the conversion of dihydroorotate to orotate with quinone as electron acceptor. The protein is Dihydroorotate dehydrogenase (quinone) of Photorhabdus laumondii subsp. laumondii (strain DSM 15139 / CIP 105565 / TT01) (Photorhabdus luminescens subsp. laumondii).